Reading from the N-terminus, the 351-residue chain is Prohormone-2 (351 aa).

The first 21 residues, 1-21 (MMCDWVWLLLTLCSLLMIVQS), serve as a signal peptide directing secretion. Propeptides lie at residues 22-177 (LPTN…QTQV) and 192-319 (ELDI…MISR). A compositionally biased stretch (polar residues) spans 51–69 (GNQQNHQPENNPSSSYSST). Disordered stretches follow at residues 51–71 (GNQQ…STAE) and 136–176 (NEDR…VQTQ). The segment covering 136–145 (NEDRRKRSEK) has biased composition (basic and acidic residues). A compositionally biased stretch (low complexity) spans 158–176 (PSTTSFQSPTSTQQSVQTQ).

Its subcellular location is the secreted. This chain is Prohormone-2, found in Apis mellifera (Honeybee).